The sequence spans 154 residues: MAARMCCQLDPARDVLCLRPVGAESRGRPVSGPFGPLPSPSSSAVPADHGAHLSLRGLPVCAFSSAGPCALRFTSARRMETTVNAHQVLPKVLYKRTLGLSAMSTTDLEAYFKDCLFKDWEELGEEIRLMIFVLGGCRHKLVCSPAPCNFFTSA.

The interval 68 to 117 (PCALRFTSARRMETTVNAHQVLPKVLYKRTLGLSAMSTTDLEAYFKDCLF) is mitochondrial targeting sequence.

It belongs to the orthohepadnavirus protein X family. In terms of assembly, may form homodimer. May interact with host CEBPA, CFLAR, CREB1, DDB1, E4F1, HBXIP, HSPD1/HSP60, NFKBIA, POLR2E and SMAD4. Interacts with host SMC5-SMC6 complex and induces its degradation. Interacts with host TRPC4AP; leading to prevent ubiquitination of TRPC4AP. Interacts with host PLSCR1; this interaction promotes ubiquitination and degradation of HBx and impairs HBx-mediated cell proliferation. In terms of processing, a fraction may be phosphorylated in insect cells and HepG2 cells, a human hepatoblastoma cell line. Phosphorylated in vitro by host protein kinase C or mitogen-activated protein kinase. N-acetylated in insect cells.

It is found in the host cytoplasm. The protein resides in the host nucleus. Its subcellular location is the host mitochondrion. Its function is as follows. Multifunctional protein that plays a role in silencing host antiviral defenses and promoting viral transcription. Does not seem to be essential for HBV infection. May be directly involved in development of cirrhosis and liver cancer (hepatocellular carcinoma). Most of cytosolic activities involve modulation of cytosolic calcium. The effect on apoptosis is controversial depending on the cell types in which the studies have been conducted. May induce apoptosis by localizing in mitochondria and causing loss of mitochondrial membrane potential. May also modulate apoptosis by binding host CFLAR, a key regulator of the death-inducing signaling complex (DISC). Promotes viral transcription by using the host E3 ubiquitin ligase DDB1 to target the SMC5-SMC6 complex to proteasomal degradation. This host complex would otherwise bind to viral episomal DNA, and prevents its transcription. Moderately stimulates transcription of many different viral and cellular transcription elements. Promoters and enhancers stimulated by HBx contain DNA binding sites for NF-kappa-B, AP-1, AP-2, c-EBP, ATF/CREB, or the calcium-activated factor NF-AT. The chain is Protein X from Homo sapiens (Human).